A 442-amino-acid polypeptide reads, in one-letter code: tRNA(Ile)-lysidine synthase (442 aa).

28–33 lines the ATP pocket; it reads SGGLDS.

It belongs to the tRNA(Ile)-lysidine synthase family.

It is found in the cytoplasm. The catalysed reaction is cytidine(34) in tRNA(Ile2) + L-lysine + ATP = lysidine(34) in tRNA(Ile2) + AMP + diphosphate + H(+). Functionally, ligates lysine onto the cytidine present at position 34 of the AUA codon-specific tRNA(Ile) that contains the anticodon CAU, in an ATP-dependent manner. Cytidine is converted to lysidine, thus changing the amino acid specificity of the tRNA from methionine to isoleucine. This chain is tRNA(Ile)-lysidine synthase, found in Pseudomonas aeruginosa (strain ATCC 15692 / DSM 22644 / CIP 104116 / JCM 14847 / LMG 12228 / 1C / PRS 101 / PAO1).